We begin with the raw amino-acid sequence, 176 residues long: NAD(P)H-quinone oxidoreductase subunit 6, chloroplastic (176 aa).

The next 5 helical transmembrane spans lie at 10–30 (FLLVFFGSGLILGGLGVILFT), 33–53 (IFSAFSLGLVLVCISLFYIIA), 61–81 (AQLLIYVGAINVLIIFAVMFI), 92–112 (LFTLGDGMTLVICTGIFFLLI), and 152–172 (FFPPFELISIILLVALIGAIA).

This sequence belongs to the complex I subunit 6 family. As to quaternary structure, NDH is composed of at least 16 different subunits, 5 of which are encoded in the nucleus.

It is found in the plastid. It localises to the chloroplast thylakoid membrane. It catalyses the reaction a plastoquinone + NADH + (n+1) H(+)(in) = a plastoquinol + NAD(+) + n H(+)(out). It carries out the reaction a plastoquinone + NADPH + (n+1) H(+)(in) = a plastoquinol + NADP(+) + n H(+)(out). In terms of biological role, NDH shuttles electrons from NAD(P)H:plastoquinone, via FMN and iron-sulfur (Fe-S) centers, to quinones in the photosynthetic chain and possibly in a chloroplast respiratory chain. The immediate electron acceptor for the enzyme in this species is believed to be plastoquinone. Couples the redox reaction to proton translocation, and thus conserves the redox energy in a proton gradient. The chain is NAD(P)H-quinone oxidoreductase subunit 6, chloroplastic (ndhG) from Fagopyrum esculentum subsp. ancestrale (Wild buckwheat).